A 1113-amino-acid chain; its full sequence is Coiled-coil domain-containing protein 158 (1113 aa).

The span at 1-14 (MESKAWESNNEDLL) shows a compositional bias: polar residues. The segment at 1–26 (MESKAWESNNEDLLSSSGVTSNGGSS) is disordered. A compositionally biased stretch (low complexity) spans 15–26 (SSSGVTSNGGSS). 2 coiled-coil regions span residues 72–183 (GKEH…LSHE) and 243–833 (VEDQ…QEQE). Disordered regions lie at residues 848-902 (LQGP…DPTR) and 955-1062 (CHRS…IETT). 5 stretches are compositionally biased toward polar residues: residues 867 to 894 (ASVTRSHSNVPSSQSTASFLSHHSTKAN), 955 to 974 (CHRSNNSLRDSTEGSKSSET), 994 to 1017 (FTFTSAASPSVKNSASRSFNSSPK), 1024 to 1040 (LLTSSVEGSIGSTSQYR), and 1053 to 1062 (DSQSPPIETT). Residues 1061 to 1113 (TTGKTCRKLQNRLESLQTLVEDLQLKNQAMSSMIRNQEKRIQKVKDQEKMLLK) adopt a coiled-coil conformation.

This chain is Coiled-coil domain-containing protein 158 (CCDC158), found in Homo sapiens (Human).